The following is a 212-amino-acid chain: Methylthioribulose-1-phosphate dehydratase (212 aa).

The Zn(2+) site is built by His97 and His99.

This sequence belongs to the aldolase class II family. MtnB subfamily. As to quaternary structure, homotetramer. Requires Zn(2+) as cofactor.

It catalyses the reaction 5-(methylsulfanyl)-D-ribulose 1-phosphate = 5-methylsulfanyl-2,3-dioxopentyl phosphate + H2O. Its pathway is amino-acid biosynthesis; L-methionine biosynthesis via salvage pathway; L-methionine from S-methyl-5-thio-alpha-D-ribose 1-phosphate: step 2/6. Catalyzes the dehydration of methylthioribulose-1-phosphate (MTRu-1-P) into 2,3-diketo-5-methylthiopentyl-1-phosphate (DK-MTP-1-P). The polypeptide is Methylthioribulose-1-phosphate dehydratase (Bacillus thuringiensis subsp. konkukian (strain 97-27)).